The primary structure comprises 556 residues: Phosphomethylpyrimidine synthase (556 aa).

Substrate-binding positions include asparagine 191, methionine 220, tyrosine 249, histidine 285, 305–307 (SRG), 346–349 (DALR), and glutamate 385. Histidine 389 lines the Zn(2+) pocket. Tyrosine 412 lines the substrate pocket. Residue histidine 453 participates in Zn(2+) binding. Residues cysteine 535, cysteine 538, and cysteine 543 each coordinate [4Fe-4S] cluster.

This sequence belongs to the ThiC family. Requires [4Fe-4S] cluster as cofactor.

It catalyses the reaction 5-amino-1-(5-phospho-beta-D-ribosyl)imidazole + S-adenosyl-L-methionine = 4-amino-2-methyl-5-(phosphooxymethyl)pyrimidine + CO + 5'-deoxyadenosine + formate + L-methionine + 3 H(+). It participates in cofactor biosynthesis; thiamine diphosphate biosynthesis. Functionally, catalyzes the synthesis of the hydroxymethylpyrimidine phosphate (HMP-P) moiety of thiamine from aminoimidazole ribotide (AIR) in a radical S-adenosyl-L-methionine (SAM)-dependent reaction. The sequence is that of Phosphomethylpyrimidine synthase from Chlorobaculum tepidum (strain ATCC 49652 / DSM 12025 / NBRC 103806 / TLS) (Chlorobium tepidum).